The primary structure comprises 141 residues: Large ribosomal subunit protein uL11 (141 aa).

Belongs to the universal ribosomal protein uL11 family. As to quaternary structure, part of the ribosomal stalk of the 50S ribosomal subunit. Interacts with L10 and the large rRNA to form the base of the stalk. L10 forms an elongated spine to which L12 dimers bind in a sequential fashion forming a multimeric L10(L12)X complex. In terms of processing, one or more lysine residues are methylated.

Its function is as follows. Forms part of the ribosomal stalk which helps the ribosome interact with GTP-bound translation factors. The chain is Large ribosomal subunit protein uL11 from Selenomonas ruminantium.